A 248-amino-acid chain; its full sequence is Coenzyme F420:L-glutamate ligase (248 aa).

GTP is bound by residues 15–18 (IPLI), 45–46 (ET), and Lys50. Residue Asp115 participates in a divalent metal cation binding. Asn118 is a GTP binding site. Residues Asp155, Ser156, and Gln213 each coordinate a divalent metal cation. 211-218 (MGQSNEGI) lines the GTP pocket.

It belongs to the CofE family. As to quaternary structure, homodimer. Requires Mg(2+) as cofactor. Mn(2+) serves as cofactor. It depends on K(+) as a cofactor.

It catalyses the reaction oxidized coenzyme F420-0 + GTP + L-glutamate = oxidized coenzyme F420-1 + GDP + phosphate + H(+). The catalysed reaction is oxidized coenzyme F420-1 + GTP + L-glutamate = oxidized coenzyme F420-2 + GDP + phosphate + H(+). Its pathway is cofactor biosynthesis; coenzyme F420 biosynthesis. In terms of biological role, catalyzes the GTP-dependent successive addition of two or more gamma-linked L-glutamates to the L-lactyl phosphodiester of 7,8-didemethyl-8-hydroxy-5-deazariboflavin (F420-0) to form coenzyme F420-0-glutamyl-glutamate (F420-2) or polyglutamated F420 derivatives. This chain is Coenzyme F420:L-glutamate ligase, found in Methanococcus maripaludis (strain DSM 14266 / JCM 13030 / NBRC 101832 / S2 / LL).